Consider the following 129-residue polypeptide: NADPH-dependent 7-cyano-7-deazaguanine reductase (129 aa).

The Thioimide intermediate role is filled by C42. D49 acts as the Proton donor in catalysis. Substrate-binding positions include 64–66 (VEL) and 83–84 (HE).

Belongs to the GTP cyclohydrolase I family. QueF type 1 subfamily.

The protein resides in the cytoplasm. It carries out the reaction 7-aminomethyl-7-carbaguanine + 2 NADP(+) = 7-cyano-7-deazaguanine + 2 NADPH + 3 H(+). It participates in tRNA modification; tRNA-queuosine biosynthesis. In terms of biological role, catalyzes the NADPH-dependent reduction of 7-cyano-7-deazaguanine (preQ0) to 7-aminomethyl-7-deazaguanine (preQ1). In Synechococcus sp. (strain CC9605), this protein is NADPH-dependent 7-cyano-7-deazaguanine reductase.